The primary structure comprises 333 residues: Syntaxin-4 (333 aa).

Residues 1 to 312 (MGKDRLPELL…QHQKKARKKK (312 aa)) are Cytoplasmic-facing. Low complexity predominate over residues 50 to 66 (YSVVSQNSHSCSNNNSS). The tract at residues 50–81 (YSVVSQNSHSCSNNNSSTEPKDRSSSKMTQYG) is disordered. Positions 91 to 116 (YTEIRQQLAQIAANLETMNRMAQTVN) form a coiled coil. In terms of domain architecture, t-SNARE coiled-coil homology spans 239–301 (LREMMDRFNE…DKGADELDQA (63 aa)). Residues 313–333 (IMLIVILAAVLLVLLLVGIYL) traverse the membrane as a helical; Anchor for type IV membrane protein segment.

The protein belongs to the syntaxin family.

It localises to the membrane. In terms of biological role, potentially involved in docking of synaptic vesicles at presynaptic active zones. This chain is Syntaxin-4, found in Drosophila melanogaster (Fruit fly).